We begin with the raw amino-acid sequence, 156 residues long: MQTTKNQDDLVRIFKSILKEERFGSQSEIVAALQAEGFGNINQSKVSRMLSKFGAVRTRNAKQEMVYCLPAELGVPTAGSPLKNLVLDVDHNQAMIVVRTSPGAAQLIARLLDSIGKPEGILGTIAGDDTIFICPSSIQDIADTLETIKSLFNYAE.

This sequence belongs to the ArgR family.

The protein resides in the cytoplasm. Its pathway is amino-acid biosynthesis; L-arginine biosynthesis [regulation]. In terms of biological role, regulates arginine biosynthesis genes. This Shewanella putrefaciens (strain CN-32 / ATCC BAA-453) protein is Arginine repressor.